The chain runs to 555 residues: Tetracycline 7-halogenase (555 aa).

22–27 (GSGLSG) lines the FAD pocket.

This sequence belongs to the flavin-dependent halogenase family. Bacterial tryptophan halogenase subfamily. In terms of assembly, homodimer.

The enzyme catalyses tetracycline + FADH2 + chloride + O2 = 7-chlorotetracycline + FAD + 2 H2O + H(+). It participates in antibiotic biosynthesis. Involved in the biosynthesis of chlorotetracycline (CTC), an important member from antibiotics tetracycline (TC) family, which inhibits protein synthesis in bacteria and is widely involved in clinical therapy, animal feeds and aquaculture. Utilizes FADH(2) supplied by the flavin reductase CtcQ, to catalyze the chlorination of tetracycline (TC) at C7 position, leading to the production of 7-chlorotetracycline. The enzyme forms a lysine chloramine intermediate on an internal lysine residue before transferring the chlorine to the substrate. It is stereo-selective for the 4S (natural) isomer of tetracycline. The chain is Tetracycline 7-halogenase from Kitasatospora aureofaciens (Streptomyces aureofaciens).